Consider the following 437-residue polypeptide: Glutamate-1-semialdehyde 2,1-aminomutase (437 aa).

Residue Lys-273 is modified to N6-(pyridoxal phosphate)lysine.

This sequence belongs to the class-III pyridoxal-phosphate-dependent aminotransferase family. HemL subfamily. Homodimer. It depends on pyridoxal 5'-phosphate as a cofactor.

It is found in the cytoplasm. It catalyses the reaction (S)-4-amino-5-oxopentanoate = 5-aminolevulinate. The protein operates within porphyrin-containing compound metabolism; protoporphyrin-IX biosynthesis; 5-aminolevulinate from L-glutamyl-tRNA(Glu): step 2/2. This chain is Glutamate-1-semialdehyde 2,1-aminomutase, found in Chlamydia felis (strain Fe/C-56) (Chlamydophila felis).